The primary structure comprises 275 residues: 3-methyl-2-oxobutanoate hydroxymethyltransferase (275 aa).

Mg(2+) is bound by residues aspartate 44 and aspartate 83. Residues aspartate 44–serine 45, aspartate 83, and lysine 113 contribute to the 3-methyl-2-oxobutanoate site. A Mg(2+)-binding site is contributed by glutamate 115. Residue glutamate 182 is the Proton acceptor of the active site.

It belongs to the PanB family. Homodecamer; pentamer of dimers. Mg(2+) is required as a cofactor.

It is found in the cytoplasm. It carries out the reaction 3-methyl-2-oxobutanoate + (6R)-5,10-methylene-5,6,7,8-tetrahydrofolate + H2O = 2-dehydropantoate + (6S)-5,6,7,8-tetrahydrofolate. The protein operates within cofactor biosynthesis; (R)-pantothenate biosynthesis; (R)-pantoate from 3-methyl-2-oxobutanoate: step 1/2. Catalyzes the reversible reaction in which hydroxymethyl group from 5,10-methylenetetrahydrofolate is transferred onto alpha-ketoisovalerate to form ketopantoate. In Clostridium botulinum (strain Alaska E43 / Type E3), this protein is 3-methyl-2-oxobutanoate hydroxymethyltransferase.